The chain runs to 637 residues: DNA mismatch repair protein MutL (637 aa).

2 disordered regions span residues 352–384 and 405–430; these read DDFT…NVLF and ASVE…AMEQ.

Belongs to the DNA mismatch repair MutL/HexB family.

In terms of biological role, this protein is involved in the repair of mismatches in DNA. It is required for dam-dependent methyl-directed DNA mismatch repair. May act as a 'molecular matchmaker', a protein that promotes the formation of a stable complex between two or more DNA-binding proteins in an ATP-dependent manner without itself being part of a final effector complex. This is DNA mismatch repair protein MutL from Halalkalibacterium halodurans (strain ATCC BAA-125 / DSM 18197 / FERM 7344 / JCM 9153 / C-125) (Bacillus halodurans).